Consider the following 571-residue polypeptide: Carboxylesterase 3 (571 aa).

The first 26 residues, 1-26 (MERAVRVESGVLVGVVCLLLACPATA), serve as a signal peptide directing secretion. Cys97 and Cys124 are joined by a disulfide. Asn105 carries an N-linked (GlcNAc...) asparagine glycan. Ser229 acts as the Acyl-ester intermediate in catalysis. Residues Cys281 and Cys292 are joined by a disulfide bond. Catalysis depends on charge relay system residues Glu347 and His460. The Prevents secretion from ER signature appears at 568-571 (QEDL).

The protein belongs to the type-B carboxylesterase/lipase family. Post-translationally, N-glycosylated. As to expression, expressed in liver, colon and small intestine.

Its subcellular location is the endoplasmic reticulum lumen. It catalyses the reaction a carboxylic ester + H2O = an alcohol + a carboxylate + H(+). In terms of biological role, involved in the detoxification of xenobiotics and in the activation of ester and amide prodrugs. Shows low catalytic efficiency for hydrolysis of CPT-11 (7-ethyl-10-[4-(1-piperidino)-1-piperidino]-carbonyloxycamptothecin), a prodrug for camptothecin used in cancer therapeutics. The protein is Carboxylesterase 3 (CES3) of Homo sapiens (Human).